We begin with the raw amino-acid sequence, 203 residues long: Outer-membrane lipoprotein carrier protein (203 aa).

Residues 1-21 (MKKLAITCALLSGMVVSQVWA) form the signal peptide. Residues 184–203 (DASKFTFTPPKGVTVDDQRK) are disordered.

Belongs to the LolA family. As to quaternary structure, monomer.

It is found in the periplasm. Participates in the translocation of lipoproteins from the inner membrane to the outer membrane. Only forms a complex with a lipoprotein if the residue after the N-terminal Cys is not an aspartate (The Asp acts as a targeting signal to indicate that the lipoprotein should stay in the inner membrane). In Klebsiella pneumoniae (strain 342), this protein is Outer-membrane lipoprotein carrier protein.